Consider the following 1930-residue polypeptide: Ankyrin repeat domain-containing protein SAT10 (1930 aa).

ANK repeat units lie at residues 840-872 (FRHT…DLEE), 878-908 (GTWN…GVLN), 920-949 (SGNT…MRGY), 959-989 (QRSS…DYSK), 993-1023 (NGAS…FSNE), 1073-1102 (SGLT…DANG), 1106-1135 (EFEA…TKTE), 1144-1174 (GRTR…QLSH), 1178-1205 (NQRT…ETET), 1206-1235 (GLQE…EINA), 1239-1268 (YGNT…RLDL), 1272-1301 (DNVN…DVNA), 1304-1333 (GGDT…KFIL), 1339-1368 (RFEN…ERDL), 1400-1429 (SGWT…GRAA), 1514-1543 (QNML…SLTP), 1548-1577 (RHGT…MLAD), 1615-1644 (MGRN…NEDL), 1651-1680 (DGWT…KIFD), and 1696-1724 (KTWT…TTSD).

It functions in the pathway mycotoxin biosynthesis. Its function is as follows. Ankyrin repeat domain-containing protein; part of the satratoxin SC1 cluster involved in the biosynthesis of satratoxins, trichothecene mycotoxins that are associated with human food poisonings. Satratoxins are suggested to be made by products of multiple gene clusters (SC1, SC2 and SC3) that encode 21 proteins in all, including polyketide synthases, acetyltransferases, and other enzymes expected to modify the trichothecene skeleton. SC1 encodes 10 proteins, SAT1 to SAT10. The largest are SAT8, which encodes a putative polyketide synthase (PKS) with a conventional non-reducing architecture, and SAT10, a putative protein containing four ankyrin repeats and thus may be involved in protein scaffolding. The putative short-chain reductase SAT3 may assist the PKS in some capacity. SAT6 contains a secretory lipase domain and acts probably as a trichothecene esterase. SAT5 encodes a putative acetyltransferase, and so, with SAT6, may affect endogenous protection from toxicity. The probable transcription factor SAT9 may regulate the expression of the SC1 cluster. SC2 encodes proteins SAT11 to SAT16, the largest of which encodes the putative reducing PKS SAT13. SAT11 is a cytochrome P450 monooxygenase, while SAT14 and SAT16 are probable acetyltransferases. The SC2 cluster may be regulated by the transcription factor SAT15. SC3 is a small cluster that encodes 5 proteins, SAT17 to SAT21. SAT21 is a putative MFS-type transporter which may have a role in exporting secondary metabolites. The four other proteins putatively encoded in SC3 include the taurine hydroxylase-like protein SAT17, the O-methyltransferase SAT18, the acetyltransferase SAT19, and the Cys6-type zinc finger SAT20, the latter being probably involved in regulation of SC3 expression. In Stachybotrys chartarum (strain CBS 109288 / IBT 7711) (Toxic black mold), this protein is Ankyrin repeat domain-containing protein SAT10.